Here is a 432-residue protein sequence, read N- to C-terminus: Adenylosuccinate synthetase 2 (432 aa).

GTP-binding positions include 12-18 (GDEGKGR) and 40-42 (GHT). Asp-13 (proton acceptor) is an active-site residue. Mg(2+)-binding residues include Asp-13 and Gly-40. IMP is bound by residues 13 to 16 (DEGK), 38 to 41 (NAGH), Thr-128, Arg-142, Gln-222, Thr-237, and Arg-301. Residue His-41 is the Proton donor of the active site. Substrate is bound at residue 297-303 (VNTGRPR). GTP is bound by residues Arg-303, 329-331 (KLD), and 411-413 (TTG).

Belongs to the adenylosuccinate synthetase family. In terms of assembly, homodimer. Requires Mg(2+) as cofactor.

The protein resides in the cytoplasm. It catalyses the reaction IMP + L-aspartate + GTP = N(6)-(1,2-dicarboxyethyl)-AMP + GDP + phosphate + 2 H(+). It participates in purine metabolism; AMP biosynthesis via de novo pathway; AMP from IMP: step 1/2. Plays an important role in the de novo pathway of purine nucleotide biosynthesis. Catalyzes the first committed step in the biosynthesis of AMP from IMP. This chain is Adenylosuccinate synthetase 2, found in Burkholderia lata (strain ATCC 17760 / DSM 23089 / LMG 22485 / NCIMB 9086 / R18194 / 383).